Here is a 766-residue protein sequence, read N- to C-terminus: TRP-like ion channel protein flc1 (766 aa).

The signal sequence occupies residues 1-24 (MRIPLFILTFLFTFFSLATTPVSA). At 25–170 (DSGVLYTDAV…ANGKTAHQKG (146 aa)) the chain is on the lumenal side. N-linked (GlcNAc...) asparagine glycosylation is found at Asn56, Asn73, Asn89, and Asn109. Residues 171–191 (VIWASAIFTLVAFLVAIWHTA) form a helical membrane-spanning segment. Residues 192 to 205 (SGTSTSPIQYRWFD) lie on the Cytoplasmic side of the membrane. A helical membrane pass occupies residues 206–226 (ILFIFQVAAASGLLHLNYPLV). The Lumenal segment spans residues 227-351 (YTNFVQNFHW…RIPEANAYDT (125 aa)). An N-linked (GlcNAc...) asparagine glycan is attached at Asn325. Residues 352–372 (IWFVFLALIGIFIAFHVLLFG) traverse the membrane as a helical segment. Residues 373 to 407 (MVLLFDRMGRNRSHLGWAARLRRMWWPFCVGNSLR) lie on the Cytoplasmic side of the membrane. Residues 408-428 (LCLIGFFPIWIFAFWQFHIGD) traverse the membrane as a helical segment. Topologically, residues 429–432 (SGLS) are lumenal. The helical transmembrane segment at 433–453 (IFWAVFGILLTLVPLATAFLL) threads the bilayer. At 454-493 (SLLRARRISSTSPEINSLYTSFRYFHSIGVLYRQYRQKFH) the chain is on the cytoplasmic side. The chain crosses the membrane as a helical span at residues 494–514 (YFWFTPFVLAMIARAGFIAFG). The Lumenal segment spans residues 515–517 (PAS). The chain crosses the membrane as a helical span at residues 518–538 (AWAQVIGNLVVEFIVLVALLA). At 539–548 (CRPHKDKKGD) the chain is on the cytoplasmic side. A helical membrane pass occupies residues 549-569 (WLGAFLSICRLIAIGLLIAFI). The Lumenal portion of the chain corresponds to 570–580 (PDMNVKPIPRA). A helical transmembrane segment spans residues 581–601 (VIAFVIIVFYGVPVVFLFVGF). Over 602-766 (LWNIGYGYLW…TDEKQWSRRY (165 aa)) the chain is Cytoplasmic. The disordered stretch occupies residues 704–766 (ASSADGALSP…TDEKQWSRRY (63 aa)). Basic and acidic residues predominate over residues 757–766 (TDEKQWSRRY).

It belongs to the transient receptor potential (TRP) ion channel family.

Its subcellular location is the endoplasmic reticulum membrane. Its function is as follows. Endoplasmic reticulum membrane flavin carrier protein that plays a crucial role in Ca(2+) signaling/homeostasis via the modulation of the calcineurin-Crz1 stress response pathway which is important for both stress responses and virulence. The polypeptide is TRP-like ion channel protein flc1 (Cryptococcus neoformans var. grubii serotype A (strain H99 / ATCC 208821 / CBS 10515 / FGSC 9487) (Filobasidiella neoformans var. grubii)).